The primary structure comprises 602 residues: Beta-(1--&gt;2)glucan export ATP-binding/permease protein NdvA (602 aa).

The 286-residue stretch at 21–306 (GWLLAFANLL…VVSFINNVFM (286 aa)) folds into the ABC transmembrane type-1 domain. Helical transmembrane passes span 22–42 (WLLA…PVLF), 63–83 (FLAA…LVAL), 141–161 (EHFA…YLNW), 163–183 (LAIL…FVVR), 240–262 (VLSW…VLAI), and 280–300 (IVMF…VVSF). Positions 340–573 (VEFNDVTFSY…GGHFAELARA (234 aa)) constitute an ABC transporter domain. 373–380 (GPTGAGKS) lines the ATP pocket.

It belongs to the ABC transporter superfamily. Beta-(1--&gt;2)glucan exporter (TC 3.A.1.108.1) family. In terms of assembly, homodimer.

The protein localises to the cell inner membrane. It carries out the reaction [(1-&gt;2)-beta-D-glucosyl](n)(in) + ATP + H2O = [(1-&gt;2)-beta-D-glucosyl](n)(out) + ADP + phosphate + H(+). Functionally, involved in beta-(1--&gt;2)glucan export. Transmembrane domains (TMD) form a pore in the inner membrane and the ATP-binding domain (NBD) is responsible for energy generation. In Bradyrhizobium diazoefficiens (strain JCM 10833 / BCRC 13528 / IAM 13628 / NBRC 14792 / USDA 110), this protein is Beta-(1--&gt;2)glucan export ATP-binding/permease protein NdvA.